A 388-amino-acid chain; its full sequence is Formate-dependent phosphoribosylglycinamide formyltransferase (388 aa).

N(1)-(5-phospho-beta-D-ribosyl)glycinamide contacts are provided by residues 20 to 21 (EL) and glutamate 80. ATP-binding positions include arginine 112, lysine 153, 158–163 (SSGKGQ), 193–196 (EEFI), and glutamate 201. One can recognise an ATP-grasp domain in the interval 117-306 (RLAFEKLGLR…EFEIHARAIL (190 aa)). 2 residues coordinate Mg(2+): glutamate 265 and glutamate 277. N(1)-(5-phospho-beta-D-ribosyl)glycinamide is bound by residues aspartate 284, lysine 352, and 359–360 (RR).

It belongs to the PurK/PurT family. Homodimer.

The enzyme catalyses N(1)-(5-phospho-beta-D-ribosyl)glycinamide + formate + ATP = N(2)-formyl-N(1)-(5-phospho-beta-D-ribosyl)glycinamide + ADP + phosphate + H(+). The protein operates within purine metabolism; IMP biosynthesis via de novo pathway; N(2)-formyl-N(1)-(5-phospho-D-ribosyl)glycinamide from N(1)-(5-phospho-D-ribosyl)glycinamide (formate route): step 1/1. Functionally, involved in the de novo purine biosynthesis. Catalyzes the transfer of formate to 5-phospho-ribosyl-glycinamide (GAR), producing 5-phospho-ribosyl-N-formylglycinamide (FGAR). Formate is provided by PurU via hydrolysis of 10-formyl-tetrahydrofolate. The sequence is that of Formate-dependent phosphoribosylglycinamide formyltransferase from Methanococcus maripaludis (strain C5 / ATCC BAA-1333).